The following is a 1209-amino-acid chain: DNA-directed RNA polymerase subunit beta (1209 aa).

Over residues 1173–1192 (QQEKKKLAEEAAKKDDKPDE) the composition is skewed to basic and acidic residues. The interval 1173–1209 (QQEKKKLAEEAAKKDDKPDEPVDESDSSTSSDDKVSK) is disordered.

Belongs to the RNA polymerase beta chain family. In terms of assembly, the RNAP catalytic core consists of 2 alpha, 1 beta, 1 beta' and 1 omega subunit. When a sigma factor is associated with the core the holoenzyme is formed, which can initiate transcription.

The enzyme catalyses RNA(n) + a ribonucleoside 5'-triphosphate = RNA(n+1) + diphosphate. DNA-dependent RNA polymerase catalyzes the transcription of DNA into RNA using the four ribonucleoside triphosphates as substrates. The sequence is that of DNA-directed RNA polymerase subunit beta from Lactobacillus johnsonii (strain CNCM I-12250 / La1 / NCC 533).